The sequence spans 102 residues: P antigen family member 4 (102 aa).

Basic residues predominate over residues 1–10; it reads MSARVRSRSR. Residues 1-102 form a disordered region; it reads MSARVRSRSR…KTKEAGDGQP (102 aa). Ser7 is modified (phosphoserine; by CLK2). Phosphoserine; by HIPK1 and CLK2 is present on Ser9. Residues 45–85 show a composition bias toward basic and acidic residues; that stretch reads GQEREGTPPIEERKVEGDCQEMDLEKTRSERGDGSDVKEKT. Thr51 bears the Phosphothreonine; by HIPK1 and CLK2 mark. Thr71 is subject to Phosphothreonine; by CLK2. Residues Ser73 and Ser79 each carry the phosphoserine; by CLK2 modification. Phosphothreonine; by CLK2 is present on residues Thr85 and Thr94.

It belongs to the GAGE family. As to quaternary structure, interacts with JUN. In terms of processing, HIPK1-mediated phosphorylation at Thr-51 leads to the compaction of its intrinsically disordered conformation and is critical for its ability to potentiate the transcriptional activator activity of JUN inspite of a reduced interaction with JUN. CLK2-mediated phosphorylation at multiple Ser and Thr residues attenuates its ability to potentiate JUN transcriptional activator activity. As to expression, expressed at basal lvels in the adult normal prostate gland but is highly up-regulated in the fetal prostate and prostate cancer cells. Preferentially expressed in normal male and female reproductive tissues, testis, fallopian tube, uterus, and placenta, as well as in testicular cancer, uterine cancer, cervical cancer and kidney cancer.

Its subcellular location is the cytoplasm. It is found in the nucleus. It localises to the mitochondrion. Functionally, intrinsically disordered protein that potentiates the transcriptional activator activity of JUN. Protects cells from stress-induced apoptosis by inhibiting reactive oxygen species (ROS) production and via regulation of the MAPK signaling pathway. This is P antigen family member 4 (PAGE4) from Homo sapiens (Human).